The chain runs to 152 residues: UPF0266 membrane protein YobD (152 aa).

3 helical membrane passes run 6–26 (LVLILFIAALLAFAIYDQFIM), 45–65 (IDSVIFVGLIVILIYNNVTNH), and 67–87 (ALITTWLLSALALMGFYIFWI).

It belongs to the UPF0266 family.

The protein resides in the cell inner membrane. This chain is UPF0266 membrane protein YobD, found in Escherichia coli O45:K1 (strain S88 / ExPEC).